The primary structure comprises 211 residues: Thiamine-phosphate synthase (211 aa).

Residues 37–41 and Asn-69 each bind 4-amino-2-methyl-5-(diphosphooxymethyl)pyrimidine; that span reads QLRIK. Positions 70 and 89 each coordinate Mg(2+). Ser-108 is a 4-amino-2-methyl-5-(diphosphooxymethyl)pyrimidine binding site. 2-[(2R,5Z)-2-carboxy-4-methylthiazol-5(2H)-ylidene]ethyl phosphate is bound at residue 134-136; the sequence is TQT. Residue Lys-137 coordinates 4-amino-2-methyl-5-(diphosphooxymethyl)pyrimidine. Residues Gly-166 and 186-187 contribute to the 2-[(2R,5Z)-2-carboxy-4-methylthiazol-5(2H)-ylidene]ethyl phosphate site; that span reads VS.

It belongs to the thiamine-phosphate synthase family. Mg(2+) serves as cofactor.

It catalyses the reaction 2-[(2R,5Z)-2-carboxy-4-methylthiazol-5(2H)-ylidene]ethyl phosphate + 4-amino-2-methyl-5-(diphosphooxymethyl)pyrimidine + 2 H(+) = thiamine phosphate + CO2 + diphosphate. The enzyme catalyses 2-(2-carboxy-4-methylthiazol-5-yl)ethyl phosphate + 4-amino-2-methyl-5-(diphosphooxymethyl)pyrimidine + 2 H(+) = thiamine phosphate + CO2 + diphosphate. The catalysed reaction is 4-methyl-5-(2-phosphooxyethyl)-thiazole + 4-amino-2-methyl-5-(diphosphooxymethyl)pyrimidine + H(+) = thiamine phosphate + diphosphate. It functions in the pathway cofactor biosynthesis; thiamine diphosphate biosynthesis; thiamine phosphate from 4-amino-2-methyl-5-diphosphomethylpyrimidine and 4-methyl-5-(2-phosphoethyl)-thiazole: step 1/1. In terms of biological role, condenses 4-methyl-5-(beta-hydroxyethyl)thiazole monophosphate (THZ-P) and 2-methyl-4-amino-5-hydroxymethyl pyrimidine pyrophosphate (HMP-PP) to form thiamine monophosphate (TMP). The sequence is that of Thiamine-phosphate synthase from Citrobacter koseri (strain ATCC BAA-895 / CDC 4225-83 / SGSC4696).